The sequence spans 166 residues: Large ribosomal subunit protein uL10 (166 aa).

The protein belongs to the universal ribosomal protein uL10 family. In terms of assembly, part of the ribosomal stalk of the 50S ribosomal subunit. The N-terminus interacts with L11 and the large rRNA to form the base of the stalk. The C-terminus forms an elongated spine to which L12 dimers bind in a sequential fashion forming a multimeric L10(L12)X complex.

Functionally, forms part of the ribosomal stalk, playing a central role in the interaction of the ribosome with GTP-bound translation factors. This is Large ribosomal subunit protein uL10 from Streptococcus pyogenes serotype M28 (strain MGAS6180).